Reading from the N-terminus, the 331-residue chain is 3-dehydroquinate synthase homolog (331 aa).

This sequence belongs to the archaeal-type DHQ synthase family.

This is 3-dehydroquinate synthase homolog from Persephonella marina (strain DSM 14350 / EX-H1).